The sequence spans 418 residues: Nucleoredoxin (418 aa).

Residues 109-309 (KYKVTSIPSL…ESNAVQLHEG (201 aa)) enclose the Thioredoxin domain.

It belongs to the nucleoredoxin family.

The protein resides in the cytoplasm. Its subcellular location is the cytosol. It is found in the nucleus. The enzyme catalyses [protein]-dithiol + NAD(+) = [protein]-disulfide + NADH + H(+). It carries out the reaction [protein]-dithiol + NADP(+) = [protein]-disulfide + NADPH + H(+). In terms of biological role, functions as a redox-dependent negative regulator of the Wnt signaling pathway. The sequence is that of Nucleoredoxin (nxn) from Danio rerio (Zebrafish).